A 631-amino-acid polypeptide reads, in one-letter code: Serine/threonine-protein kinase PLK3 (631 aa).

The segment at 1–59 (MEPAAGFLSPRPFPRAAVPSAPPAGPGPPANASPRSEPEVLAGPRAPDPPGRLITDPLS) is disordered. Residues 20–31 (SAPPAGPGPPAN) show a composition bias toward pro residues. The Protein kinase domain occupies 63 to 315 (YTKGRLLGKG…IEQILRHDFF (253 aa)). ATP contacts are provided by residues 69-77 (LGKGGFARC) and Lys92. Asp186 (proton acceptor) is an active-site residue. 2 consecutive POLO box domains span residues 448–526 (WVSK…YMEQ) and 547–630 (LLLQ…DQSP).

The protein belongs to the protein kinase superfamily. Ser/Thr protein kinase family. CDC5/Polo subfamily. In terms of assembly, interacts (via the POLO-box domain) with CIB1; leading to inhibit PLK3 kinase activity. Interacts with GOLGB1. In terms of processing, phosphorylated in an ATM-dependent manner following DNA damage. Phosphorylated as cells enter mitosis and dephosphorylated as cells exit mitosis. Expressed in skin.

Its subcellular location is the cytoplasm. It localises to the nucleus. The protein localises to the nucleolus. It is found in the golgi apparatus. The protein resides in the cytoskeleton. Its subcellular location is the microtubule organizing center. It localises to the centrosome. It carries out the reaction L-seryl-[protein] + ATP = O-phospho-L-seryl-[protein] + ADP + H(+). The enzyme catalyses L-threonyl-[protein] + ATP = O-phospho-L-threonyl-[protein] + ADP + H(+). In terms of biological role, serine/threonine-protein kinase involved in cell cycle regulation, response to stress and Golgi disassembly. Polo-like kinases act by binding and phosphorylating proteins that are already phosphorylated on a specific motif recognized by the POLO box domains. Phosphorylates ATF2, BCL2L1, CDC25A, CDC25C, CHEK2, HIF1A, JUN, p53/TP53, p73/TP73, PTEN, TOP2A and VRK1. Involved in cell cycle regulation: required for entry into S phase and cytokinesis. Phosphorylates BCL2L1, leading to regulate the G2 checkpoint and progression to cytokinesis during mitosis. Plays a key role in response to stress: rapidly activated upon stress stimulation, such as ionizing radiation, reactive oxygen species (ROS), hyperosmotic stress, UV irradiation and hypoxia. Involved in DNA damage response and G1/S transition checkpoint by phosphorylating CDC25A, p53/TP53 and p73/TP73. Phosphorylates p53/TP53 in response to reactive oxygen species (ROS), thereby promoting p53/TP53-mediated apoptosis. Phosphorylates CHEK2 in response to DNA damage, promoting the G2/M transition checkpoint. Phosphorylates the transcription factor p73/TP73 in response to DNA damage, leading to inhibit p73/TP73-mediated transcriptional activation and pro-apoptotic functions. Phosphorylates HIF1A and JUN is response to hypoxia. Phosphorylates ATF2 following hyperosmotic stress in corneal epithelium. Also involved in Golgi disassembly during the cell cycle: part of a MEK1/MAP2K1-dependent pathway that induces Golgi fragmentation during mitosis by mediating phosphorylation of VRK1. May participate in endomitotic cell cycle, a form of mitosis in which both karyokinesis and cytokinesis are interrupted and is a hallmark of megakaryocyte differentiation, via its interaction with CIB1. The chain is Serine/threonine-protein kinase PLK3 (Plk3) from Mus musculus (Mouse).